Reading from the N-terminus, the 99-residue chain is Nucleoid-associated protein MGAS2096_Spy1605 (99 aa).

This sequence belongs to the YbaB/EbfC family. Homodimer.

It localises to the cytoplasm. The protein localises to the nucleoid. Functionally, binds to DNA and alters its conformation. May be involved in regulation of gene expression, nucleoid organization and DNA protection. This Streptococcus pyogenes serotype M12 (strain MGAS2096) protein is Nucleoid-associated protein MGAS2096_Spy1605.